A 61-amino-acid polypeptide reads, in one-letter code: Metallothionein-I, hippocampal (61 aa).

At methionine 1 the chain carries N-acetylmethionine. Positions methionine 1–cysteine 29 are beta. A divalent metal cation is bound by residues cysteine 5, cysteine 7, cysteine 13, cysteine 15, cysteine 19, cysteine 21, cysteine 24, cysteine 26, cysteine 29, cysteine 33, cysteine 34, cysteine 36, cysteine 37, cysteine 41, cysteine 44, cysteine 48, cysteine 50, and cysteine 57. The tract at residues lysine 30–alanine 61 is alpha. Serine 58 carries the post-translational modification Phosphoserine. A divalent metal cation contacts are provided by cysteine 59 and cysteine 60.

It belongs to the metallothionein superfamily. Type 1 family.

Functionally, metallothioneins have a high content of cysteine residues that bind various heavy metals; these proteins are transcriptionally regulated by both heavy metals and glucocorticoids. This isoform may play a role in regulating the transport, accumulation, and compartmentation of zinc in the hippocampus. In Bos taurus (Bovine), this protein is Metallothionein-I, hippocampal.